We begin with the raw amino-acid sequence, 666 residues long: Peptidase S41 family protein phomP1 (666 aa).

Residues methionine 1 to serine 27 form the signal peptide. 3 N-linked (GlcNAc...) asparagine glycosylation sites follow: asparagine 70, asparagine 214, and asparagine 234. Residues aspartate 303–valine 504 form a peptidase S41 domain region. N-linked (GlcNAc...) asparagine glycosylation is found at asparagine 555 and asparagine 612.

The protein belongs to the peptidase S41A family.

It functions in the pathway mycotoxin biosynthesis. In terms of biological role, peptidase S41 family protein; part of the gene cluster that mediates the biosynthesis of the phomopsins, a group of hexapeptide mycotoxins which infects lupins and causes lupinosis disease in livestock. Within the pathway, phomP1 and phomP1' are probably involved in the processing of the phomA and phomA' precursors. The pathway starts with the processing of the precursor phomA by several endopeptidases including kexin proteases as well as the cluster-specific S41 family peptidase phomP1 and the oligopeptidase phomG to produce 10 identical copies of the hexapeptide Tyr-Val-Ile-Pro-Ile-Asp. After being excised from the precursor peptide, the core peptides are cyclized and modified post-translationally by enzymes encoded within the gene cluster. The timing and order of proteolysis of the phomA precursor and PTMs are still unknown. Two tyrosinase-like enzymes, phomQ1 and phomQ2, catalyze the chlorination and hydroxylation of Tyr, respectively. PhomYb, is proposed to be involved in the construction of the macrocyclic structure. The other 4 ustYa family proteins may be involved in PTMs that generate the unique structure of phomopsin A. PhomYa is required for the hydroxylation of C-beta of Tyr. PhomYc, phomYd, and phomYe are responsible for the biosynthesis of 2,3-dehydroisoleucine (dIle), 2,3-dehydroaspartic acid (dAsp), and 3,4-dehydroproline (dPro), respectively. While dIle formation by phomYc is indispensable for the installation of dAsp by phomYd, the order of the other PTMs have not been elucidated yet. Most of the biosynthetic enzymes likely have broad substrate specificity, and thus, there might be a metabolic grid from a precursor to phomopsin A. The enzyme(s) responsible for the biosynthesis of 3,4-dehydrovaline (dVal) have also not been identified yet. Finally, phomM acts as an S-adenosylmethionine-dependent alpha-N-methyltransferase that catalyzes two successive N-methylation reactions, converting N-desmethyl-phomopsin A to phomopsin A and phomopsin A further to an N,N-dimethylated congener called phomopsin E. The protein is Peptidase S41 family protein phomP1 of Diaporthe leptostromiformis (Lupinosis disease fungus).